A 665-amino-acid polypeptide reads, in one-letter code: ELMO family protein LMO1 (665 aa).

Forms an active heterodimer with DCK1.

It localises to the cytoplasm. It is found in the mitochondrion. In terms of biological role, forms a transiant heterodimeric complex with DCK1, that acts as a guanine nucleotide exchange factor (GEF) for the small GTPase RHO5. DCK1, LMO1 and RHO5 relocate to mitochondria upon oxidative stress and trigger cell death. The DCK1/LMO1/RHO5 signaling module mediates mitochondrial turnover under nitrogen starvation conditions via mitophagy. The DCK1/LMO1/RHO5 signaling module also plays a role in cell wall integrity signaling. This chain is ELMO family protein LMO1, found in Saccharomyces cerevisiae (strain ATCC 204508 / S288c) (Baker's yeast).